Reading from the N-terminus, the 242-residue chain is Ubiquinone biosynthesis O-methyltransferase (242 aa).

S-adenosyl-L-methionine is bound by residues R44, G64, D85, and M129.

This sequence belongs to the methyltransferase superfamily. UbiG/COQ3 family.

It catalyses the reaction a 3-demethylubiquinol + S-adenosyl-L-methionine = a ubiquinol + S-adenosyl-L-homocysteine + H(+). The enzyme catalyses a 3-(all-trans-polyprenyl)benzene-1,2-diol + S-adenosyl-L-methionine = a 2-methoxy-6-(all-trans-polyprenyl)phenol + S-adenosyl-L-homocysteine + H(+). The protein operates within cofactor biosynthesis; ubiquinone biosynthesis. In terms of biological role, O-methyltransferase that catalyzes the 2 O-methylation steps in the ubiquinone biosynthetic pathway. This chain is Ubiquinone biosynthesis O-methyltransferase, found in Klebsiella pneumoniae (strain 342).